The sequence spans 212 residues: Fe/S biogenesis protein NfuA (212 aa).

The [4Fe-4S] cluster site is built by Cys-169 and Cys-172.

The protein belongs to the NfuA family. As to quaternary structure, homodimer. [4Fe-4S] cluster is required as a cofactor.

In terms of biological role, involved in iron-sulfur cluster biogenesis. Binds a 4Fe-4S cluster, can transfer this cluster to apoproteins, and thereby intervenes in the maturation of Fe/S proteins. Could also act as a scaffold/chaperone for damaged Fe/S proteins. In Acinetobacter baumannii (strain AB307-0294), this protein is Fe/S biogenesis protein NfuA.